The primary structure comprises 144 residues: Large ribosomal subunit protein uL11 (144 aa).

It belongs to the universal ribosomal protein uL11 family. In terms of assembly, part of the ribosomal stalk of the 50S ribosomal subunit. Interacts with L10 and the large rRNA to form the base of the stalk. L10 forms an elongated spine to which L12 dimers bind in a sequential fashion forming a multimeric L10(L12)X complex. Post-translationally, one or more lysine residues are methylated.

Functionally, forms part of the ribosomal stalk which helps the ribosome interact with GTP-bound translation factors. The sequence is that of Large ribosomal subunit protein uL11 from Frankia alni (strain DSM 45986 / CECT 9034 / ACN14a).